The chain runs to 373 residues: UDP-N-acetylglucosamine--N-acetylmuramyl-(pentapeptide) pyrophosphoryl-undecaprenol N-acetylglucosamine transferase (373 aa).

UDP-N-acetyl-alpha-D-glucosamine is bound by residues 16–18 (TGG), asparagine 128, arginine 164, serine 192, isoleucine 250, and glutamine 295.

It belongs to the glycosyltransferase 28 family. MurG subfamily.

Its subcellular location is the cell inner membrane. It catalyses the reaction di-trans,octa-cis-undecaprenyl diphospho-N-acetyl-alpha-D-muramoyl-L-alanyl-D-glutamyl-meso-2,6-diaminopimeloyl-D-alanyl-D-alanine + UDP-N-acetyl-alpha-D-glucosamine = di-trans,octa-cis-undecaprenyl diphospho-[N-acetyl-alpha-D-glucosaminyl-(1-&gt;4)]-N-acetyl-alpha-D-muramoyl-L-alanyl-D-glutamyl-meso-2,6-diaminopimeloyl-D-alanyl-D-alanine + UDP + H(+). It functions in the pathway cell wall biogenesis; peptidoglycan biosynthesis. In terms of biological role, cell wall formation. Catalyzes the transfer of a GlcNAc subunit on undecaprenyl-pyrophosphoryl-MurNAc-pentapeptide (lipid intermediate I) to form undecaprenyl-pyrophosphoryl-MurNAc-(pentapeptide)GlcNAc (lipid intermediate II). In Paraburkholderia phymatum (strain DSM 17167 / CIP 108236 / LMG 21445 / STM815) (Burkholderia phymatum), this protein is UDP-N-acetylglucosamine--N-acetylmuramyl-(pentapeptide) pyrophosphoryl-undecaprenol N-acetylglucosamine transferase.